A 794-amino-acid chain; its full sequence is Protein argonaute-4 (794 aa).

Residues 152–271 (PIIEFMCEVL…LPLEVCNIVA (120 aa)) enclose the PAZ domain. The Piwi domain maps to 442–753 (LIVVILPGKT…VAFRARYHLV (312 aa)). A disordered region spans residues 758–779 (DSAEGSHVSGQSNGRDPQALAK).

It belongs to the argonaute family. Ago subfamily.

The protein localises to the cytoplasm. It localises to the P-body. In terms of biological role, required for RNA-mediated gene silencing (RNAi). Binds to short RNAs such as microRNAs (miRNAs) and represses the translation of mRNAs which are complementary to them. Lacks endonuclease activity and does not appear to cleave target mRNAs. The polypeptide is Protein argonaute-4 (AGO4) (Gallus gallus (Chicken)).